A 74-amino-acid chain; its full sequence is Protein kish-B (74 aa).

An N-terminal signal peptide occupies residues 1-22; that stretch reads MTNVYSLDGLLVFALLFVCTCA. Residues 23 to 52 lie on the Extracellular side of the membrane; that stretch reads YFRKVPRLRSWLLSEKKGVWGVFYKAAVIG. A helical transmembrane segment spans residues 53–73; that stretch reads SRLHLAVSISCIAMAFYVLFI. K74 is a topological domain (cytoplasmic).

Belongs to the KISH family.

The protein resides in the golgi apparatus membrane. Involved in the early part of the secretory pathway. The protein is Protein kish-B (tmem167b) of Xenopus laevis (African clawed frog).